Here is a 637-residue protein sequence, read N- to C-terminus: Serine/threonine protein kinase ypkA (637 aa).

Low complexity predominate over residues 20-29 (TFTRSSSTST). Disordered stretches follow at residues 20–63 (TFTR…SLVS) and 104–140 (SSSV…INAA). Positions 40–61 (VVSQTPSISSTNSNGINASESL) are enriched in polar residues. The span at 104–116 (SSSVRPSSSSSHS) shows a compositional bias: low complexity. Over residues 117–136 (THGQTASFAQSGRPQSTSGG) the composition is skewed to polar residues. In terms of domain architecture, Protein kinase spans 294 to 551 (FDLLKVVGKG…AAEIKSHHFF (258 aa)). ATP is bound by residues 300 to 308 (VGKGSFGKV) and Lys-323. The active-site Proton acceptor is the Asp-417. Residues 552–623 (ANIDWRKLLQ…NRPVAGLGDA (72 aa)) enclose the AGC-kinase C-terminal domain. Residues Ser-593 and Ser-612 each carry the phosphoserine modification. The residue at position 613 (Tyr-613) is a Phosphotyrosine.

It belongs to the protein kinase superfamily. Ser/Thr protein kinase family. As to quaternary structure, interacts with the sakA MAP kinase.

It carries out the reaction L-seryl-[protein] + ATP = O-phospho-L-seryl-[protein] + ADP + H(+). The enzyme catalyses L-threonyl-[protein] + ATP = O-phospho-L-threonyl-[protein] + ADP + H(+). Functionally, serine/threonine protein kinase required for vegetative growth and conidiation. Important for fungal survival through the regulation of glycosphingolipid (GSL) biosynthesis and cross talks with MAP kinase pathways such as the cell wall integrity (CWI) and the high osmolarity glycerol (HOG) pathways. The polypeptide is Serine/threonine protein kinase ypkA (Aspergillus fumigatus (strain ATCC MYA-4609 / CBS 101355 / FGSC A1100 / Af293) (Neosartorya fumigata)).